The chain runs to 492 residues: GTPase Obg (492 aa).

An Obg domain is found at 2 to 159 (PRFVDRVVIH…RELTLELKTV (158 aa)). The OBG-type G domain maps to 160–340 (ADVGLIGFPS…LIFGLWQMIS (181 aa)). Residues 166–173 (GFPSAGKS), 191–195 (FTTLV), 212–215 (DVPG), 292–295 (NKID), and 321–323 (STV) contribute to the GTP site. The Mg(2+) site is built by Ser-173 and Thr-193. Residues 358–438 (PVPVDDSGFR…IGDMTFDWEP (81 aa)) form the OCT domain. The tract at residues 441 to 492 (PAGQQVVLSGRGTDARLERTERVGAAERKAARRQRRTGDDAERGTTERGENT) is disordered. Composition is skewed to basic and acidic residues over residues 453–469 (TDARLERTERVGAAERK) and 476–492 (RTGDDAERGTTERGENT).

The protein belongs to the TRAFAC class OBG-HflX-like GTPase superfamily. OBG GTPase family. Monomer. The cofactor is Mg(2+).

It is found in the cytoplasm. Its function is as follows. An essential GTPase which binds GTP, GDP and possibly (p)ppGpp with moderate affinity, with high nucleotide exchange rates and a fairly low GTP hydrolysis rate. Plays a role in control of the cell cycle, stress response, ribosome biogenesis and in those bacteria that undergo differentiation, in morphogenesis control. This Mycolicibacterium paratuberculosis (strain ATCC BAA-968 / K-10) (Mycobacterium paratuberculosis) protein is GTPase Obg.